The chain runs to 204 residues: Holliday junction branch migration complex subunit RuvA (204 aa).

The segment at 1 to 64 (MIGRLQGILL…EDAHLLFGFA (64 aa)) is domain I. Positions 65–143 (QKTDRTLFRE…GVKQSDFFVE (79 aa)) are domain II. Residues 144–155 (STHIPLSPSIES) form a flexible linker region. The interval 156-204 (HSESSSDEAISALIALGYKPVEAEKMVKRVAKPELTSEQVIREALKVAL) is domain III.

Belongs to the RuvA family. Homotetramer. Forms an RuvA(8)-RuvB(12)-Holliday junction (HJ) complex. HJ DNA is sandwiched between 2 RuvA tetramers; dsDNA enters through RuvA and exits via RuvB. An RuvB hexamer assembles on each DNA strand where it exits the tetramer. Each RuvB hexamer is contacted by two RuvA subunits (via domain III) on 2 adjacent RuvB subunits; this complex drives branch migration. In the full resolvosome a probable DNA-RuvA(4)-RuvB(12)-RuvC(2) complex forms which resolves the HJ.

Its subcellular location is the cytoplasm. Functionally, the RuvA-RuvB-RuvC complex processes Holliday junction (HJ) DNA during genetic recombination and DNA repair, while the RuvA-RuvB complex plays an important role in the rescue of blocked DNA replication forks via replication fork reversal (RFR). RuvA specifically binds to HJ cruciform DNA, conferring on it an open structure. The RuvB hexamer acts as an ATP-dependent pump, pulling dsDNA into and through the RuvAB complex. HJ branch migration allows RuvC to scan DNA until it finds its consensus sequence, where it cleaves and resolves the cruciform DNA. The sequence is that of Holliday junction branch migration complex subunit RuvA from Haemophilus influenzae (strain ATCC 51907 / DSM 11121 / KW20 / Rd).